The sequence spans 878 residues: Leucine--tRNA ligase (878 aa).

Positions 1–14 (MTASKSSSATASAS) are enriched in low complexity. The disordered stretch occupies residues 1–23 (MTASKSSSATASASDRPDRYDPI). Residues 58 to 68 (PYPSGSLHMGH) carry the 'HIGH' region motif. Residues 632-636 (KMSKS) carry the 'KMSKS' region motif. Lys-635 contacts ATP.

The protein belongs to the class-I aminoacyl-tRNA synthetase family.

It is found in the cytoplasm. It catalyses the reaction tRNA(Leu) + L-leucine + ATP = L-leucyl-tRNA(Leu) + AMP + diphosphate. This Synechococcus sp. (strain WH7803) protein is Leucine--tRNA ligase.